Consider the following 116-residue polypeptide: Non-specific lipid-transfer protein (116 aa).

Positions 1-25 (MASMVMNVLCVAVACMVFSASYADA) are cleaved as a signal peptide. Cystine bridges form between C28/C75, C38/C52, C53/C98, and C73/C112.

This sequence belongs to the plant LTP family.

Its function is as follows. Plant non-specific lipid-transfer proteins transfer phospholipids as well as galactolipids across membranes. May play a role in wax or cutin deposition in the cell walls of expanding epidermal cells and certain secretory tissues. The protein is Non-specific lipid-transfer protein of Gerbera hybrida (Daisy).